The chain runs to 101 residues: MILMFRMNKGMSFITLLFSLALFSVLFLVFNQWTASQRKSTVKTYQDFQAIQVAENQAQRQFLGLACEQLIQQNGLTFRIQCENERIIVRYPTSEILIKTQ.

The signal sequence occupies residues 1–24 (MILMFRMNKGMSFITLLFSLALFS).

This is an uncharacterized protein from Haemophilus influenzae (strain ATCC 51907 / DSM 11121 / KW20 / Rd).